A 155-amino-acid polypeptide reads, in one-letter code: MAKGEGKVVAQNKKARHDYTIVDTLEAGMVLTGTEIKSVRAARINLKDGFAQVKNGEVWLSNVHIAPYEEGNIWNQEPERRRKLLLHKRQIQKLEQETKGTGMTLVPLKVYIKDGYAKLLLGLAKGKHDYDKRESIKRREQNRDIARVMKAVNQR.

It belongs to the SmpB family.

It localises to the cytoplasm. In terms of biological role, required for rescue of stalled ribosomes mediated by trans-translation. Binds to transfer-messenger RNA (tmRNA), required for stable association of tmRNA with ribosomes. tmRNA and SmpB together mimic tRNA shape, replacing the anticodon stem-loop with SmpB. tmRNA is encoded by the ssrA gene; the 2 termini fold to resemble tRNA(Ala) and it encodes a 'tag peptide', a short internal open reading frame. During trans-translation Ala-aminoacylated tmRNA acts like a tRNA, entering the A-site of stalled ribosomes, displacing the stalled mRNA. The ribosome then switches to translate the ORF on the tmRNA; the nascent peptide is terminated with the 'tag peptide' encoded by the tmRNA and targeted for degradation. The ribosome is freed to recommence translation, which seems to be the essential function of trans-translation. The chain is SsrA-binding protein from Streptococcus pneumoniae (strain P1031).